A 295-amino-acid chain; its full sequence is CRISPR-associated endonuclease Cas1 2 (295 aa).

The Mn(2+) site is built by Glu-155, His-215, and Glu-230.

This sequence belongs to the CRISPR-associated endonuclease Cas1 family. In terms of assembly, homodimer, forms a heterotetramer with a Cas2 homodimer. Mg(2+) is required as a cofactor. It depends on Mn(2+) as a cofactor.

Functionally, CRISPR (clustered regularly interspaced short palindromic repeat), is an adaptive immune system that provides protection against mobile genetic elements (viruses, transposable elements and conjugative plasmids). CRISPR clusters contain spacers, sequences complementary to antecedent mobile elements, and target invading nucleic acids. CRISPR clusters are transcribed and processed into CRISPR RNA (crRNA). Acts as a dsDNA endonuclease. Involved in the integration of spacer DNA into the CRISPR cassette. The polypeptide is CRISPR-associated endonuclease Cas1 2 (Pyrobaculum aerophilum (strain ATCC 51768 / DSM 7523 / JCM 9630 / CIP 104966 / NBRC 100827 / IM2)).